The following is a 118-amino-acid chain: Small ribosomal subunit protein uS13 (118 aa).

The disordered stretch occupies residues 92–118; the sequence is KKHLPVRGQRTKTNARTRKGPRKPIKK.

This sequence belongs to the universal ribosomal protein uS13 family. Part of the 30S ribosomal subunit. Forms a loose heterodimer with protein S19. Forms two bridges to the 50S subunit in the 70S ribosome.

Located at the top of the head of the 30S subunit, it contacts several helices of the 16S rRNA. In the 70S ribosome it contacts the 23S rRNA (bridge B1a) and protein L5 of the 50S subunit (bridge B1b), connecting the 2 subunits; these bridges are implicated in subunit movement. Contacts the tRNAs in the A and P-sites. The polypeptide is Small ribosomal subunit protein uS13 (Wigglesworthia glossinidia brevipalpis).